The sequence spans 113 residues: Putative glycerol transporter Lin0367 (113 aa).

The next 4 membrane-spanning stretches (helical) occupy residues 3–23 (IGIALATIAGGFLFPFAIRMM), 30–50 (EWGAIGGWMAAAFIVGTVWTI), 63–83 (GTVWVDMAVAAGIGVFTASLL), and 92–112 (VVNLAAAVVGGVLGGFLLSLF).

Its subcellular location is the membrane. Could be involved in the glycerol uptake either via facilitated diffusion or active transport. This is Putative glycerol transporter Lin0367 from Listeria innocua serovar 6a (strain ATCC BAA-680 / CLIP 11262).